A 553-amino-acid chain; its full sequence is Formate--tetrahydrofolate ligase (553 aa).

62–69 (TPAGEGKS) is a binding site for ATP.

This sequence belongs to the formate--tetrahydrofolate ligase family.

The catalysed reaction is (6S)-5,6,7,8-tetrahydrofolate + formate + ATP = (6R)-10-formyltetrahydrofolate + ADP + phosphate. Its pathway is one-carbon metabolism; tetrahydrofolate interconversion. This is Formate--tetrahydrofolate ligase from Pediococcus pentosaceus (strain ATCC 25745 / CCUG 21536 / LMG 10740 / 183-1w).